The primary structure comprises 714 residues: Cyclomaltodextrin glucanotransferase (714 aa).

Residues methionine 1–alanine 27 form the signal peptide. The interval serine 28–proline 165 is A1. Ca(2+) contacts are provided by aspartate 54, asparagine 59, asparagine 60, glycine 78, and aspartate 80. Residue tyrosine 127–tryptophan 128 coordinates substrate. Residue asparagine 166 coordinates Ca(2+). Residues asparagine 166–histidine 229 are b. Histidine 167 contributes to the substrate binding site. Isoleucine 217 is a Ca(2+) binding site. Asparagine 220–aspartate 223 provides a ligand contact to substrate. Aspartate 226 provides a ligand contact to Ca(2+). The interval asparagine 230–tyrosine 434 is A2. Arginine 254 lines the substrate pocket. The Nucleophile role is filled by aspartate 256. Lysine 259–histidine 260 is a binding site for substrate. Histidine 260 serves as a coordination point for Ca(2+). Glutamate 285 (proton donor) is an active-site residue. 3 residues coordinate substrate: histidine 355, aspartate 399, and arginine 403. A c region spans residues glycine 435–proline 523. The segment at glutamate 524–leucine 610 is d. One can recognise an IPT/TIG domain in the interval proline 527 to phenylalanine 607. The 106-residue stretch at valine 609–asparagine 714 folds into the CBM20 domain. The segment at threonine 611–asparagine 714 is e.

It belongs to the glycosyl hydrolase 13 family. In terms of assembly, monomer. Ca(2+) serves as cofactor.

The protein resides in the secreted. The enzyme catalyses Cyclizes part of a (1-&gt;4)-alpha-D-glucan chain by formation of a (1-&gt;4)-alpha-D-glucosidic bond.. This chain is Cyclomaltodextrin glucanotransferase (cgtM), found in Paenibacillus macerans (Bacillus macerans).